A 257-amino-acid polypeptide reads, in one-letter code: MSINDKPIGFFDSGVGGISVLKEAFKLLPKEDFLYYGDSKNAPYGTKKVEEVKALTFNATDFLMSKGIKALVVACNTATSVTINDLRENYDIPIIGIEPALKPAVELKKGGKIIIMATPMTLAEKKFANLMDLYKETEDIEPLPCPGLPELIEQGIVSGDVIYNYLKDKFSKYDNEKISSIVLGCTHYPFIEETLKEVTHNKACIIDGSFGTSRELKRQLKNSNMLTEENRVGKVTIFNSREDKDIIDLSYKLFNMK.

Substrate-binding positions include 12–13 (DS) and 44–45 (YG). Cys75 functions as the Proton donor/acceptor in the catalytic mechanism. 76–77 (NT) is a substrate binding site. Cys185 (proton donor/acceptor) is an active-site residue. 186-187 (TH) contacts substrate.

It belongs to the aspartate/glutamate racemases family.

The catalysed reaction is L-glutamate = D-glutamate. The protein operates within cell wall biogenesis; peptidoglycan biosynthesis. Its function is as follows. Provides the (R)-glutamate required for cell wall biosynthesis. The sequence is that of Glutamate racemase from Clostridium botulinum (strain ATCC 19397 / Type A).